A 189-amino-acid polypeptide reads, in one-letter code: UPF0301 protein RMA_0049 (189 aa).

The protein belongs to the UPF0301 (AlgH) family.

This Rickettsia massiliae (strain Mtu5) protein is UPF0301 protein RMA_0049.